The sequence spans 281 residues: Pantothenate synthetase (281 aa).

Residue 30–37 (MGNLHQGH) participates in ATP binding. His37 acts as the Proton donor in catalysis. A (R)-pantoate-binding site is contributed by Gln61. Residue Gln61 coordinates beta-alanine. 149 to 152 (GRKD) lines the ATP pocket. Gln155 contacts (R)-pantoate. ATP-binding positions include Ile178 and 186–189 (MSSR).

The protein belongs to the pantothenate synthetase family. As to quaternary structure, homodimer.

It localises to the cytoplasm. The enzyme catalyses (R)-pantoate + beta-alanine + ATP = (R)-pantothenate + AMP + diphosphate + H(+). The protein operates within cofactor biosynthesis; (R)-pantothenate biosynthesis; (R)-pantothenate from (R)-pantoate and beta-alanine: step 1/1. In terms of biological role, catalyzes the condensation of pantoate with beta-alanine in an ATP-dependent reaction via a pantoyl-adenylate intermediate. In Shewanella denitrificans (strain OS217 / ATCC BAA-1090 / DSM 15013), this protein is Pantothenate synthetase.